The following is a 239-amino-acid chain: uncharacterized protein (239 aa).

8 helical membrane passes run 4–24, 29–49, 61–81, 84–104, 116–136, 139–159, 180–200, and 218–238; these read LIPK…LGMV, VIWH…VYPV, YQKW…ISVF, PPLI…MYFA, VAGV…GMGT, GWAW…SFYV, LLLP…AFIP, and IGIL…LFIT.

It to H.influenzae HI_1626.

The protein localises to the cell membrane. This is an uncharacterized protein from Bacillus subtilis (strain 168).